A 319-amino-acid polypeptide reads, in one-letter code: Tetrahydromethanopterin S-methyltransferase subunit H (319 aa).

The protein belongs to the MtrH family. The complex is composed of 8 subunits; MtrA, MtrB, MtrC, MtrD, MtrE, MtrF, MtrG and MtrH.

It carries out the reaction 5-methyl-5,6,7,8-tetrahydromethanopterin + coenzyme M + 2 Na(+)(in) = 5,6,7,8-tetrahydromethanopterin + methyl-coenzyme M + 2 Na(+)(out). It participates in one-carbon metabolism; methanogenesis from CO(2); methyl-coenzyme M from 5,10-methylene-5,6,7,8-tetrahydromethanopterin: step 2/2. In terms of biological role, part of a complex that catalyzes the formation of methyl-coenzyme M and tetrahydromethanopterin from coenzyme M and methyl-tetrahydromethanopterin. This is an energy-conserving, sodium-ion translocating step. MtrH catalyzes the transfer of the methyl group from methyl-tetrahydromethanopterin to the corrinoid prosthetic group of MtrA. The sequence is that of Tetrahydromethanopterin S-methyltransferase subunit H from Methanocaldococcus jannaschii (strain ATCC 43067 / DSM 2661 / JAL-1 / JCM 10045 / NBRC 100440) (Methanococcus jannaschii).